Here is a 398-residue protein sequence, read N- to C-terminus: Tear acid lipase-like protein (398 aa).

The signal sequence occupies residues 1–19 (MSWLLSTMCLVHVCGNIFC). The active-site Nucleophile is the S170. A disulfide bridge links C243 with C252. The N-linked (GlcNAc...) asparagine glycan is linked to N268. Active-site charge relay system residues include D340 and H369.

The protein belongs to the AB hydrolase superfamily. Lipase family. As to quaternary structure, monomer. Post-translationally, N-glycosylated. In terms of tissue distribution, expressed in female lacrimal gland acinar cells from where it is secreted into tears (at protein level).

Its subcellular location is the secreted. Functionally, female-specific protein which lacks detectable lipase activity against a range of substrates. Binds the hydrophobic lipid 1-aminoanthracene with high affinity. The chain is Tear acid lipase-like protein from Mesocricetus auratus (Golden hamster).